The following is a 115-amino-acid chain: Large ribosomal subunit protein bL20 (115 aa).

Belongs to the bacterial ribosomal protein bL20 family.

In terms of biological role, binds directly to 23S ribosomal RNA and is necessary for the in vitro assembly process of the 50S ribosomal subunit. It is not involved in the protein synthesizing functions of that subunit. This chain is Large ribosomal subunit protein bL20, found in Prochlorococcus marinus (strain SARG / CCMP1375 / SS120).